A 388-amino-acid polypeptide reads, in one-letter code: MESVFGRVRNETSERGKYGLVSVKAGKLQRKPGTNILQADHRKGVIYMQMASDELLHFYWKERARVSREVEDDYIIFPEEAEFIKIDECTTGRVYALKFKSSSQIHFYWMQEYSDEKDKETASLINQLIADPVNTTRTINSHNNSSSRGTDDSSTSQLLQLFGAASQDALQDFNWEVLSPTAEAPAILPRFPNVNESANMYRASSESNLNGPHATAGENGEDHEEATASPLDENIDYTHSRTLELLEQLQPLILNETTFVEPFSIDRESHRVITHPRVYPKIFPHSPSDLLRISGRAELSENRDFFKHLSSLMEAVAKPESESLREICNLSLEQVQSASGAELFLHALYDRLVNEGVIVISHITQEGSDGEVEEEGDVEMRESNEKDE.

Residues Arg15–Pro132 form the Pru domain. 2 disordered regions span residues Arg202–Thr227 and Ser368–Glu388. Over residues Ser368–Asp377 the composition is skewed to acidic residues. Residues Val378 to Glu388 are compositionally biased toward basic and acidic residues.

Belongs to the ADRM1 family. In terms of assembly, component of the 19S proteasome regulatory particle complex. The 2 S.pombe rpn13 homologs, rpn1301 and rpn1302 are present at a 0.2-1 ratio.

Its subcellular location is the cytoplasm. The protein resides in the nucleus. In terms of biological role, component of the 26S proteasome, a multiprotein complex involved in the ATP-dependent degradation of ubiquitinated proteins. This complex plays a key role in the maintenance of protein homeostasis by removing misfolded or damaged proteins, which could impair cellular functions, and by removing proteins whose functions are no longer required. Therefore, the proteasome participates in numerous cellular processes, including cell cycle progression, apoptosis, or DNA damage repair. Within the complex, functions as a proteasomal ubiquitin receptor. The polypeptide is Proteasomal ubiquitin receptor ADRM1 homolog rpn1302 (rpn1302) (Schizosaccharomyces pombe (strain 972 / ATCC 24843) (Fission yeast)).